Reading from the N-terminus, the 367-residue chain is F-box protein At3g56470 (367 aa).

Residues 1 to 18 are compositionally biased toward basic residues; sequence MVTRRRSKKKKKTKRKKQ. The disordered stretch occupies residues 1-24; that stretch reads MVTRRRSKKKKKTKRKKQSSKEKE. The F-box domain maps to 26–81; the sequence is YQTFINLPCDLLQLVISRLPLKDNIRASAVCKTWHEACVSLRVIHTSPWLIYFSKT.

The chain is F-box protein At3g56470 from Arabidopsis thaliana (Mouse-ear cress).